The primary structure comprises 466 residues: Cell division protein FtsP (466 aa).

A signal peptide (tat-type signal) is located at residues 1–28 (MNYSRRSLFKKTLIATALSALPATLLAA).

This sequence belongs to the FtsP family. Predicted to be exported by the Tat system. The position of the signal peptide cleavage has not been experimentally proven.

The protein resides in the periplasm. Its function is as follows. Cell division protein that is required for growth during stress conditions. May be involved in protecting or stabilizing the divisomal assembly under conditions of stress. The protein is Cell division protein FtsP of Actinobacillus succinogenes (strain ATCC 55618 / DSM 22257 / CCUG 43843 / 130Z).